Reading from the N-terminus, the 364-residue chain is 4-hydroxythreonine-4-phosphate dehydrogenase (364 aa).

Substrate is bound by residues histidine 138 and threonine 139. Positions 169, 214, and 269 each coordinate a divalent metal cation. Substrate-binding residues include lysine 277, asparagine 286, and arginine 295.

This sequence belongs to the PdxA family. In terms of assembly, homodimer. Requires a divalent metal cation as cofactor.

It is found in the cytoplasm. It carries out the reaction 4-(phosphooxy)-L-threonine + NAD(+) = 3-amino-2-oxopropyl phosphate + CO2 + NADH. It participates in cofactor biosynthesis; pyridoxine 5'-phosphate biosynthesis; pyridoxine 5'-phosphate from D-erythrose 4-phosphate: step 4/5. Its function is as follows. Catalyzes the NAD(P)-dependent oxidation of 4-(phosphooxy)-L-threonine (HTP) into 2-amino-3-oxo-4-(phosphooxy)butyric acid which spontaneously decarboxylates to form 3-amino-2-oxopropyl phosphate (AHAP). This is 4-hydroxythreonine-4-phosphate dehydrogenase from Bacteroides thetaiotaomicron (strain ATCC 29148 / DSM 2079 / JCM 5827 / CCUG 10774 / NCTC 10582 / VPI-5482 / E50).